The primary structure comprises 626 residues: Biosynthetic arginine decarboxylase (626 aa).

K99 is modified (N6-(pyridoxal phosphate)lysine). Residue 279 to 289 coordinates substrate; sequence VDVGGGLGVDY.

This sequence belongs to the Orn/Lys/Arg decarboxylase class-II family. SpeA subfamily. The cofactor is Mg(2+). It depends on pyridoxal 5'-phosphate as a cofactor.

The catalysed reaction is L-arginine + H(+) = agmatine + CO2. The protein operates within amine and polyamine biosynthesis; agmatine biosynthesis; agmatine from L-arginine: step 1/1. Its function is as follows. Catalyzes the biosynthesis of agmatine from arginine. The chain is Biosynthetic arginine decarboxylase from Chromobacterium violaceum (strain ATCC 12472 / DSM 30191 / JCM 1249 / CCUG 213 / NBRC 12614 / NCIMB 9131 / NCTC 9757 / MK).